The chain runs to 317 residues: Ferrochelatase (317 aa).

Fe cation is bound by residues His-191 and Glu-271.

It belongs to the ferrochelatase family.

The protein resides in the cytoplasm. It catalyses the reaction heme b + 2 H(+) = protoporphyrin IX + Fe(2+). It functions in the pathway porphyrin-containing compound metabolism; protoheme biosynthesis; protoheme from protoporphyrin-IX: step 1/1. Functionally, catalyzes the ferrous insertion into protoporphyrin IX. In Thermus thermophilus (strain ATCC BAA-163 / DSM 7039 / HB27), this protein is Ferrochelatase.